We begin with the raw amino-acid sequence, 582 residues long: Arginine--tRNA ligase (582 aa).

The short motif at 136-146 (ANPTGPMHMGH) is the 'HIGH' region element.

It belongs to the class-I aminoacyl-tRNA synthetase family. As to quaternary structure, monomer.

The protein localises to the cytoplasm. The catalysed reaction is tRNA(Arg) + L-arginine + ATP = L-arginyl-tRNA(Arg) + AMP + diphosphate. The protein is Arginine--tRNA ligase of Novosphingobium aromaticivorans (strain ATCC 700278 / DSM 12444 / CCUG 56034 / CIP 105152 / NBRC 16084 / F199).